Reading from the N-terminus, the 101-residue chain is Small ribosomal subunit protein uS14 (101 aa).

Residues 1-20 (MAKISAVERNKKRERLTKRD) form a disordered region.

The protein belongs to the universal ribosomal protein uS14 family. Part of the 30S ribosomal subunit. Contacts proteins S3 and S10.

Its function is as follows. Binds 16S rRNA, required for the assembly of 30S particles and may also be responsible for determining the conformation of the 16S rRNA at the A site. The protein is Small ribosomal subunit protein uS14 of Rhodospirillum rubrum (strain ATCC 11170 / ATH 1.1.1 / DSM 467 / LMG 4362 / NCIMB 8255 / S1).